Consider the following 303-residue polypeptide: Acetaldehyde dehydrogenase (303 aa).

Catalysis depends on C130, which acts as the Acyl-thioester intermediate. Residues 161–169 (SVGPGTRKN) and N272 each bind NAD(+).

It belongs to the acetaldehyde dehydrogenase family.

The catalysed reaction is acetaldehyde + NAD(+) + CoA = acetyl-CoA + NADH + H(+). This chain is Acetaldehyde dehydrogenase, found in Verminephrobacter eiseniae (strain EF01-2).